The primary structure comprises 218 residues: Small ribosomal subunit protein uS3 (218 aa).

In terms of domain architecture, KH type-2 spans 2-71 (SAPQRRLPVY…IGRKGAIVKE (70 aa)).

The protein belongs to the universal ribosomal protein uS3 family. Part of the 30S ribosomal subunit.

Binds the lower part of the 30S subunit head. This is Small ribosomal subunit protein uS3 from Pyrobaculum aerophilum (strain ATCC 51768 / DSM 7523 / JCM 9630 / CIP 104966 / NBRC 100827 / IM2).